Here is a 128-residue protein sequence, read N- to C-terminus: MDNKKKEENPSKSDTSISLPPSSTGEALQNYTESEWNASDDPYSAELLNVKKKPNRVNVFSATEKNMETIIVTEESPPQTPLPLKPVVEHHNLARLIQKSCQLLLDKTTPDGTEVQIKLEFPDWRDTA.

Positions 1 to 11 (MDNKKKEENPS) are enriched in basic and acidic residues. The interval 1 to 40 (MDNKKKEENPSKSDTSISLPPSSTGEALQNYTESEWNASD) is disordered. Polar residues predominate over residues 12–37 (KSDTSISLPPSSTGEALQNYTESEWN).

This is an uncharacterized protein from Caenorhabditis elegans.